A 914-amino-acid chain; its full sequence is Ubiquitin carboxyl-terminal hydrolase 33 (914 aa).

A UBP-type zinc finger spans residues 6 to 109 (NHCPHLDSVG…PSLPHVRQPH (104 aa)). Zn(2+) is bound by residues C8, H10, C30, C33, C43, C48, C53, H60, H64, H70, C83, and C86. The region spanning 154 to 683 (TGLKNIGNTC…EAYVLFYRKS (530 aa)) is the USP domain. C163 functions as the Nucleophile in the catalytic mechanism. Residues 266–313 (PQTITTEETMEEDKSQSDVDFQSCESCSNSDKAENENGSSCFSEDNNE) are disordered. The segment covering 283-313 (DVDFQSCESCSNSDKAENENGSSCFSEDNNE) has biased composition (polar residues). Phosphoserine is present on residues S345 and S407. Residues 387-410 (DLSTPQILPSNESINPRLSASPPK) are compositionally biased toward polar residues. A disordered region spans residues 387 to 437 (DLSTPQILPSNESINPRLSASPPKSGNLWPGLAPPHKKAQSASPKRKKQHK). Positions 421 to 437 (PHKKAQSASPKRKKQHK) are enriched in basic residues. H641 acts as the Proton acceptor in catalysis. DUSP domains are found at residues 685–778 (EEAQ…LYIC) and 786–893 (EEIE…RPPV).

Belongs to the peptidase C19 family. USP20/USP33 subfamily. In terms of assembly, interacts with VHL, leading to its ubiquitination and subsequent degradation. Interacts with ARRB1 and ARRB2. Interacts with ADRB2. Interacts with DIO2. Interacts with ROBO1. Interacts with SELENBP1; in a selenium-dependent manner. Interacts with CCP110. In terms of processing, ubiquitinated via a VHL-dependent pathway for proteasomal degradation.

It is found in the cytoplasm. Its subcellular location is the perinuclear region. The protein localises to the cytoskeleton. The protein resides in the microtubule organizing center. It localises to the centrosome. It carries out the reaction Thiol-dependent hydrolysis of ester, thioester, amide, peptide and isopeptide bonds formed by the C-terminal Gly of ubiquitin (a 76-residue protein attached to proteins as an intracellular targeting signal).. Deubiquitinating enzyme involved in various processes such as centrosome duplication, cellular migration and beta-2 adrenergic receptor/ADRB2 recycling. Involved in regulation of centrosome duplication by mediating deubiquitination of CCP110 in S and G2/M phase, leading to stabilize CCP110 during the period which centrioles duplicate and elongate. Involved in cell migration via its interaction with intracellular domain of ROBO1, leading to regulate the Slit signaling. Plays a role in commissural axon guidance cross the ventral midline of the neural tube in a Slit-dependent manner, possibly by mediating the deubiquitination of ROBO1. Acts as a regulator of G-protein coupled receptor (GPCR) signaling by mediating the deubiquitination of beta-arrestins (ARRB1 and ARRB2) and beta-2 adrenergic receptor (ADRB2). Plays a central role in ADRB2 recycling and resensitization after prolonged agonist stimulation by constitutively binding ADRB2, mediating deubiquitination of ADRB2 and inhibiting lysosomal trafficking of ADRB2. Upon dissociation, it is probably transferred to the translocated beta-arrestins, leading to beta-arrestins deubiquitination and disengagement from ADRB2. This suggests the existence of a dynamic exchange between the ADRB2 and beta-arrestins. Deubiquitinates DIO2, thereby regulating thyroid hormone regulation. Mediates deubiquitination of both 'Lys-48'- and 'Lys-63'-linked polyubiquitin chains. The chain is Ubiquitin carboxyl-terminal hydrolase 33 (USP33) from Pongo abelii (Sumatran orangutan).